The chain runs to 124 residues: Ribonuclease pancreatic (124 aa).

Over residues 1 to 15 (KESPAKKFQRQHMDP) the composition is skewed to basic and acidic residues. The segment at 1–24 (KESPAKKFQRQHMDPDSSSSNSSN) is disordered. Substrate-binding residues include K7 and R10. The active-site Proton acceptor is H12. 2 N-linked (GlcNAc...) asparagine glycosylation sites follow: N21 and N34. Intrachain disulfides connect C26/C84, C40/C95, C58/C110, and C65/C72. Residues 41–45 (KPVNT) and K66 each bind substrate. N-linked (GlcNAc...) asparagine glycosylation is present at N76. R85 contacts substrate. The active-site Proton donor is the H119.

Belongs to the pancreatic ribonuclease family. As to quaternary structure, monomer. Interacts with and forms tight 1:1 complexes with RNH1. Dimerization of two such complexes may occur. Interaction with RNH1 inhibits this protein. Pancreas.

It is found in the secreted. The enzyme catalyses an [RNA] containing cytidine + H2O = an [RNA]-3'-cytidine-3'-phosphate + a 5'-hydroxy-ribonucleotide-3'-[RNA].. The catalysed reaction is an [RNA] containing uridine + H2O = an [RNA]-3'-uridine-3'-phosphate + a 5'-hydroxy-ribonucleotide-3'-[RNA].. Its function is as follows. Endonuclease that catalyzes the cleavage of RNA on the 3' side of pyrimidine nucleotides. Acts on single-stranded and double-stranded RNA. This chain is Ribonuclease pancreatic (RNASE1), found in Sus scrofa (Pig).